The sequence spans 230 residues: 8-demethylnovobiocic acid C(8)-methyltransferase (230 aa).

This sequence belongs to the methyltransferase superfamily.

The enzyme catalyses 8-desmethylnovobiocic acid + S-adenosyl-L-methionine = novobiocic acid + S-adenosyl-L-homocysteine + H(+). Its pathway is antibiotic biosynthesis; novobiocin biosynthesis. Functionally, C-methyltransferase that methylates 8-demethylnovobiocic acid to produce novobiocic acid in the novobiocin biosynthesis pathway. Novobiocin is an aminocoumarin family antibiotic that targets bacterial DNA gyrases. The polypeptide is 8-demethylnovobiocic acid C(8)-methyltransferase (novO) (Streptomyces niveus (Streptomyces spheroides)).